We begin with the raw amino-acid sequence, 160 residues long: 3-hydroxyacyl-[acyl-carrier-protein] dehydratase FabZ (160 aa).

The active site involves H63.

This sequence belongs to the thioester dehydratase family. FabZ subfamily.

The protein resides in the cytoplasm. It carries out the reaction a (3R)-hydroxyacyl-[ACP] = a (2E)-enoyl-[ACP] + H2O. Its function is as follows. Involved in unsaturated fatty acids biosynthesis. Catalyzes the dehydration of short chain beta-hydroxyacyl-ACPs and long chain saturated and unsaturated beta-hydroxyacyl-ACPs. The polypeptide is 3-hydroxyacyl-[acyl-carrier-protein] dehydratase FabZ (Xylella fastidiosa (strain 9a5c)).